The primary structure comprises 279 residues: Putative pyruvate, phosphate dikinase regulatory protein (279 aa).

Residue 153-160 (GISRTSKT) participates in ADP binding.

Belongs to the pyruvate, phosphate/water dikinase regulatory protein family. PDRP subfamily.

It carries out the reaction N(tele)-phospho-L-histidyl/L-threonyl-[pyruvate, phosphate dikinase] + ADP = N(tele)-phospho-L-histidyl/O-phospho-L-threonyl-[pyruvate, phosphate dikinase] + AMP + H(+). It catalyses the reaction N(tele)-phospho-L-histidyl/O-phospho-L-threonyl-[pyruvate, phosphate dikinase] + phosphate + H(+) = N(tele)-phospho-L-histidyl/L-threonyl-[pyruvate, phosphate dikinase] + diphosphate. Functionally, bifunctional serine/threonine kinase and phosphorylase involved in the regulation of the pyruvate, phosphate dikinase (PPDK) by catalyzing its phosphorylation/dephosphorylation. This chain is Putative pyruvate, phosphate dikinase regulatory protein, found in Bartonella bacilliformis (strain ATCC 35685 / KC583 / Herrer 020/F12,63).